The chain runs to 225 residues: MSTLFVAGAGTEIGKTYVTAALTRALRASGRPVRALKPVASGVPDLSDPDFSASDTALLLAAQDLPVTPETVAAMTPWRFAAPLAPDLAAAREGRSLALADLVAWCETAIAAPAPGTAVLIEGVGGLMSPLTAEATGLAWLKALRLPVLLVSGSYLGAISHALTAIETLHHHAVDLRAVVVSETPGAPTPPETVAEAIARHAGVRVLCVARGGGFPAEGLDVVPA.

12 to 17 (EIGKTY) is an ATP binding site. Thr16 serves as a coordination point for Mg(2+). Lys37 is a catalytic residue. Ser41 is a substrate binding site. ATP contacts are provided by residues Asp55, 122 to 125 (EGVG), and 182 to 183 (SE). Mg(2+)-binding residues include Asp55 and Glu122.

It belongs to the dethiobiotin synthetase family. As to quaternary structure, homodimer. Requires Mg(2+) as cofactor.

The protein resides in the cytoplasm. It carries out the reaction (7R,8S)-7,8-diammoniononanoate + CO2 + ATP = (4R,5S)-dethiobiotin + ADP + phosphate + 3 H(+). Its pathway is cofactor biosynthesis; biotin biosynthesis; biotin from 7,8-diaminononanoate: step 1/2. In terms of biological role, catalyzes a mechanistically unusual reaction, the ATP-dependent insertion of CO2 between the N7 and N8 nitrogen atoms of 7,8-diaminopelargonic acid (DAPA, also called 7,8-diammoniononanoate) to form a ureido ring. The chain is ATP-dependent dethiobiotin synthetase BioD from Methylobacterium nodulans (strain LMG 21967 / CNCM I-2342 / ORS 2060).